Reading from the N-terminus, the 343-residue chain is tRNA N6-adenosine threonylcarbamoyltransferase (343 aa).

Fe cation is bound by residues H116 and H120. Substrate-binding positions include 139–143 (TVSGG), D172, G185, D189, and N280. D308 contacts Fe cation.

Belongs to the KAE1 / TsaD family. It depends on Fe(2+) as a cofactor.

Its subcellular location is the cytoplasm. It carries out the reaction L-threonylcarbamoyladenylate + adenosine(37) in tRNA = N(6)-L-threonylcarbamoyladenosine(37) in tRNA + AMP + H(+). In terms of biological role, required for the formation of a threonylcarbamoyl group on adenosine at position 37 (t(6)A37) in tRNAs that read codons beginning with adenine. Is involved in the transfer of the threonylcarbamoyl moiety of threonylcarbamoyl-AMP (TC-AMP) to the N6 group of A37, together with TsaE and TsaB. TsaD likely plays a direct catalytic role in this reaction. The protein is tRNA N6-adenosine threonylcarbamoyltransferase of Cytophaga hutchinsonii (strain ATCC 33406 / DSM 1761 / CIP 103989 / NBRC 15051 / NCIMB 9469 / D465).